We begin with the raw amino-acid sequence, 327 residues long: ATP-dependent 6-phosphofructokinase (327 aa).

ATP contacts are provided by residues Gly-12, 73 to 74, and 103 to 106; these read RL and GDGS. Asp-104 provides a ligand contact to Mg(2+). Residue 126 to 128 coordinates substrate; sequence TID. Asp-128 serves as the catalytic Proton acceptor. ADP is bound at residue Arg-155. Residues Arg-163 and 170–172 each bind substrate; that span reads MGH. ADP is bound by residues 186–188 and 214–216; these read GAD and KRS. Substrate contacts are provided by residues Glu-223, Arg-245, and 251–254; that span reads HTQR.

This sequence belongs to the phosphofructokinase type A (PFKA) family. ATP-dependent PFK group I subfamily. Prokaryotic clade 'B1' sub-subfamily. Homotetramer. The cofactor is Mg(2+).

The protein resides in the cytoplasm. It catalyses the reaction beta-D-fructose 6-phosphate + ATP = beta-D-fructose 1,6-bisphosphate + ADP + H(+). The protein operates within carbohydrate degradation; glycolysis; D-glyceraldehyde 3-phosphate and glycerone phosphate from D-glucose: step 3/4. With respect to regulation, allosterically activated by ADP and other diphosphonucleosides, and allosterically inhibited by phosphoenolpyruvate. Functionally, catalyzes the phosphorylation of D-fructose 6-phosphate to fructose 1,6-bisphosphate by ATP, the first committing step of glycolysis. The chain is ATP-dependent 6-phosphofructokinase from Spiroplasma citri.